A 437-amino-acid polypeptide reads, in one-letter code: uncharacterized protein (437 aa).

A phosphoserine mark is found at S290 and S293. A Phosphothreonine modification is found at T296. A phosphoserine mark is found at S418 and S428.

This is an uncharacterized protein from Schizosaccharomyces pombe (strain 972 / ATCC 24843) (Fission yeast).